The following is a 454-amino-acid chain: Phosphoglucosamine mutase (454 aa).

Residue Ser104 is the Phosphoserine intermediate of the active site. Residues Ser104, Asp241, Asp243, and Asp245 each contribute to the Mg(2+) site. Residue Ser104 is modified to Phosphoserine.

The protein belongs to the phosphohexose mutase family. Mg(2+) serves as cofactor. In terms of processing, activated by phosphorylation.

It catalyses the reaction alpha-D-glucosamine 1-phosphate = D-glucosamine 6-phosphate. Functionally, catalyzes the conversion of glucosamine-6-phosphate to glucosamine-1-phosphate. The chain is Phosphoglucosamine mutase from Paenarthrobacter aurescens (strain TC1).